Consider the following 251-residue polypeptide: Triosephosphate isomerase (251 aa).

10–12 is a binding site for substrate; it reads NWK. His99 (electrophile) is an active-site residue. Residue Glu167 is the Proton acceptor of the active site. Residues Gly173, Ser211, and 232–233 each bind substrate; that span reads GG.

It belongs to the triosephosphate isomerase family. In terms of assembly, homodimer.

The protein localises to the cytoplasm. It carries out the reaction D-glyceraldehyde 3-phosphate = dihydroxyacetone phosphate. It participates in carbohydrate biosynthesis; gluconeogenesis. The protein operates within carbohydrate degradation; glycolysis; D-glyceraldehyde 3-phosphate from glycerone phosphate: step 1/1. Involved in the gluconeogenesis. Catalyzes stereospecifically the conversion of dihydroxyacetone phosphate (DHAP) to D-glyceraldehyde-3-phosphate (G3P). This is Triosephosphate isomerase from Neisseria meningitidis serogroup A / serotype 4A (strain DSM 15465 / Z2491).